Reading from the N-terminus, the 316-residue chain is Probable thioesterase lcsE (316 aa).

This sequence belongs to the AMT4 thioesterase family.

The protein operates within secondary metabolite biosynthesis. In terms of biological role, probable thioesterase; part of the gene cluster that mediates the biosynthesis of the lipopeptide antibiotics leucinostatins that show extensive biological activities, including antimalarial, antiviral, antibacterial, antifungal, and antitumor activities, as well as phytotoxic. Leucinostatin A contains nine amino acid residues, including the unusual amino acid 4-methyl-L-proline (MePro), 2-amino-6-hydroxy-4-methyl-8-oxodecanoic acid (AHyMeOA), 3-hydroxyleucine (HyLeu), alpha-aminoisobutyric acid (AIB), beta-Ala, a 4-methylhex-2-enoic acid at the N-terminus as well as a N1,N1-dimethylpropane-1,2-diamine (DPD) at the C-terminus. The biosynthesis of leucinostatins is probably initiated with the assembly of 4-methylhex-2-enoic acid by a reducing PKS. Two reducing polyketide synthases, lcsB and lcsC, have been identified in the cluster and it is not clear which is the one that assembles 4-methylhex-2-enoic acid since both contain KS, AT, DH, cMT, ER, KR and ACP domains. The polyketide residue might be transferred to the NRPS lcsA, mediated by two additional enzymes, the acyl-CoA ligase lcsD and the thioesterase lcsE. The linear polyketide carboxylic acid, which is released from PKS, is converted to a CoA thioester by lcsD, and then lcsE hydrolyzes the thiol bond and shuttles the polyketide intermediate to lcsA. The C domain of the first module catalyzed the condensation of 4-methylhex-2-enoic acid and MePro carried by domain A1, followed by successive condensations of nine amino acids to trigger the elongation of the linear peptide. A5 and A6 domains of lcsA are proposed to incorporate leucine, A2 AHyMeOA, and A3 incorporates HyLeu. A4, A7 and A8 incorporate AIB. The AHyMeOA in leucinostatin A activated by the A2 might be produced by the second PKS (lcsB or lcsC) present within the cluster. The MePro is probably produced via leucine cyclization and may originate from a separate pathway, independent of the cluster. Another nonproteinogenic amino acid, beta-Ala, could be produced by an aspartic acid decarboxylase also localized outside of the cluster. Two candidates are VFPBJ_01400 and VFPBJ_10476. The final peptide scaffold may be released by the NAD(P)H-dependent thioester reductase (TE) at the C-terminal region of lcsA. Transamination of the lcsA product by the transaminase lcsP may produce DPD at the C-terminus. Further hydroxylation steps performed alternatively by the cytochrome P450 monooxygenases lcsI, lcsK and lcsN then yield the non-methylated leucinostatins precursor. It is also possible that leucines can be hydroxylated prior to their incorporation into the peptide. Varying extents of methylation then lead to the formation of leucinostatins A and B. The protein is Probable thioesterase lcsE of Purpureocillium lilacinum (Paecilomyces lilacinus).